We begin with the raw amino-acid sequence, 31 residues long: Cytochrome b6-f complex subunit 6 (31 aa).

Residues 4–26 (ITSYFGFLLTALTITSALFIGLS) traverse the membrane as a helical segment.

The protein belongs to the PetL family. As to quaternary structure, the 4 large subunits of the cytochrome b6-f complex are cytochrome b6, subunit IV (17 kDa polypeptide, PetD), cytochrome f and the Rieske protein, while the 4 small subunits are PetG, PetL, PetM and PetN. The complex functions as a dimer.

It localises to the plastid. It is found in the chloroplast thylakoid membrane. Functionally, component of the cytochrome b6-f complex, which mediates electron transfer between photosystem II (PSII) and photosystem I (PSI), cyclic electron flow around PSI, and state transitions. PetL is important for photoautotrophic growth as well as for electron transfer efficiency and stability of the cytochrome b6-f complex. The protein is Cytochrome b6-f complex subunit 6 of Lactuca sativa (Garden lettuce).